A 519-amino-acid polypeptide reads, in one-letter code: Putative cysteine ligase BshC (519 aa).

Coiled coils occupy residues Leu-51–Glu-71 and Thr-440–Ala-464.

Belongs to the BshC family.

Its function is as follows. Involved in bacillithiol (BSH) biosynthesis. May catalyze the last step of the pathway, the addition of cysteine to glucosamine malate (GlcN-Mal) to generate BSH. This chain is Putative cysteine ligase BshC, found in Exiguobacterium sibiricum (strain DSM 17290 / CCUG 55495 / CIP 109462 / JCM 13490 / 255-15).